The primary structure comprises 1031 residues: Error-prone DNA polymerase (1031 aa).

Belongs to the DNA polymerase type-C family. DnaE2 subfamily.

Its subcellular location is the cytoplasm. The enzyme catalyses DNA(n) + a 2'-deoxyribonucleoside 5'-triphosphate = DNA(n+1) + diphosphate. Functionally, DNA polymerase involved in damage-induced mutagenesis and translesion synthesis (TLS). It is not the major replicative DNA polymerase. The polypeptide is Error-prone DNA polymerase (Pseudomonas aeruginosa (strain ATCC 15692 / DSM 22644 / CIP 104116 / JCM 14847 / LMG 12228 / 1C / PRS 101 / PAO1)).